Reading from the N-terminus, the 220-residue chain is Endonuclease NucS (220 aa).

It belongs to the NucS endonuclease family.

The protein resides in the cytoplasm. Functionally, cleaves both 3' and 5' ssDNA extremities of branched DNA structures. In Parafrankia sp. (strain EAN1pec), this protein is Endonuclease NucS.